We begin with the raw amino-acid sequence, 745 residues long: Ankyrin repeat and protein kinase domain-containing protein 1 (745 aa).

Residues 34–301 (EEEWHLVASG…NVAVETDMLL (268 aa)) form the Protein kinase domain. ATP is bound by residues 40–48 (VASGGFSKV) and K63. Catalysis depends on D157, which acts as the Proton acceptor. ANK repeat units follow at residues 369–398 (NRVTPLHFLVAGGSLEQVRLLLSHDVDVDC), 402–431 (SGYTPLLIATQDQQPDLCALLLAHGADTNL), 435–464 (DGWAPLHFAAQNGDDHTARLLLDHGALVNA), 468–497 (EGWTPLHLAAQNNFENVARLLVSRQADLSP), 501–530 (EGKTPLHVAAYFGHIGLVKLLSGQGAELDA), 534–563 (NLRTPLHLAVERGKVRAIQHLLKCGALPDA), 567–596 (SGYSPLHIAAARGKDLIFKMLLRYGASLEL), 600–629 (QGWTPLHLATYKGHLEIIHQLAKSHVDLDA), 633–662 (MQWTPLHLAAFQGEEGVMLALLQCGANPNA), 666–695 (SGWTPLHLAVHKGTFLGITHLLEYGADIHA), and 699–728 (VGWTPAHLAALKGNTAILKVLVKAAAQVDV).

Belongs to the protein kinase superfamily. TKL Ser/Thr protein kinase family.

The enzyme catalyses L-seryl-[protein] + ATP = O-phospho-L-seryl-[protein] + ADP + H(+). It catalyses the reaction L-threonyl-[protein] + ATP = O-phospho-L-threonyl-[protein] + ADP + H(+). The sequence is that of Ankyrin repeat and protein kinase domain-containing protein 1 (Ankk1) from Mus musculus (Mouse).